The primary structure comprises 644 residues: Macrolide export ATP-binding/permease protein MacB (644 aa).

Residues 4-242 (IECKNINRCF…SNVGRIREKA (239 aa)) enclose the ABC transporter domain. 40–47 (GQSGSGKS) is a binding site for ATP. The next 4 membrane-spanning stretches (helical) occupy residues 270–290 (LLTM…VALG), 524–544 (IALI…LVSV), 574–594 (LICI…SLVF), and 607–627 (AASV…FGFM).

The protein belongs to the ABC transporter superfamily. Macrolide exporter (TC 3.A.1.122) family. Homodimer.

It localises to the cell inner membrane. In terms of biological role, non-canonical ABC transporter that contains transmembrane domains (TMD), which form a pore in the inner membrane, and an ATP-binding domain (NBD), which is responsible for energy generation. Confers resistance against macrolides. This chain is Macrolide export ATP-binding/permease protein MacB, found in Neisseria gonorrhoeae (strain ATCC 700825 / FA 1090).